A 295-amino-acid chain; its full sequence is Bifunctional protein FolD (295 aa).

Residues 166–168 (GRS), serine 191, and isoleucine 232 each bind NADP(+).

The protein belongs to the tetrahydrofolate dehydrogenase/cyclohydrolase family. Homodimer.

The enzyme catalyses (6R)-5,10-methylene-5,6,7,8-tetrahydrofolate + NADP(+) = (6R)-5,10-methenyltetrahydrofolate + NADPH. It catalyses the reaction (6R)-5,10-methenyltetrahydrofolate + H2O = (6R)-10-formyltetrahydrofolate + H(+). The protein operates within one-carbon metabolism; tetrahydrofolate interconversion. Functionally, catalyzes the oxidation of 5,10-methylenetetrahydrofolate to 5,10-methenyltetrahydrofolate and then the hydrolysis of 5,10-methenyltetrahydrofolate to 10-formyltetrahydrofolate. The sequence is that of Bifunctional protein FolD from Rhodopseudomonas palustris (strain ATCC BAA-98 / CGA009).